Here is a 57-residue protein sequence, read N- to C-terminus: Probable mRNA interferase HicA 1 (57 aa).

It belongs to the HicA mRNA interferase family. In terms of assembly, probably forms a complex with the cognate antitoxin HicB 1 which inhibits the mRNA interferase activity.

Toxic component of a type II toxin-antitoxin (TA) system. A probable translation-independent mRNA interferase. The polypeptide is Probable mRNA interferase HicA 1 (hicA1) (Photorhabdus laumondii subsp. laumondii (strain DSM 15139 / CIP 105565 / TT01) (Photorhabdus luminescens subsp. laumondii)).